The following is a 113-amino-acid chain: Large ribosomal subunit protein uL22 (113 aa).

Belongs to the universal ribosomal protein uL22 family. Part of the 50S ribosomal subunit.

Functionally, this protein binds specifically to 23S rRNA; its binding is stimulated by other ribosomal proteins, e.g. L4, L17, and L20. It is important during the early stages of 50S assembly. It makes multiple contacts with different domains of the 23S rRNA in the assembled 50S subunit and ribosome. Its function is as follows. The globular domain of the protein is located near the polypeptide exit tunnel on the outside of the subunit, while an extended beta-hairpin is found that lines the wall of the exit tunnel in the center of the 70S ribosome. This chain is Large ribosomal subunit protein uL22, found in Symbiobacterium thermophilum (strain DSM 24528 / JCM 14929 / IAM 14863 / T).